The sequence spans 132 residues: Small ribosomal subunit protein uS8 (132 aa).

Belongs to the universal ribosomal protein uS8 family. As to quaternary structure, part of the 30S ribosomal subunit. Contacts proteins S5 and S12.

In terms of biological role, one of the primary rRNA binding proteins, it binds directly to 16S rRNA central domain where it helps coordinate assembly of the platform of the 30S subunit. The protein is Small ribosomal subunit protein uS8 of Paenarthrobacter aurescens (strain TC1).